A 36-amino-acid chain; its full sequence is Defensin-like turtle egg white protein TEWP (36 aa).

A Pyrrolidone carboxylic acid modification is found at Q1. 3 disulfides stabilise this stretch: C4-C30, C8-C29, and C12-C24.

This sequence belongs to the beta-defensin family. As to quaternary structure, monomer. In terms of tissue distribution, detected in egg white (at protein level).

It localises to the secreted. Antibacterial and antiviral peptide. Has strong inhibitory activity towards E.coli and S.typhimurium. Has significant antiviral activity against Chandipura virus. The protein is Defensin-like turtle egg white protein TEWP of Caretta caretta (Loggerhead sea turtle).